Here is a 448-residue protein sequence, read N- to C-terminus: Oxysterol-binding protein homolog 6 (448 aa).

The segment at 1 to 42 (MGSKKLTVGSDSHRLSKSSFSSNKSSHSATKDQPIDTDDIDE) is disordered. A Phosphoserine modification is found at S16. Residues 17–28 (KSSFSSNKSSHS) show a composition bias toward low complexity. Positions 54–391 (IISQLRPGCD…PGEDLDYCIY (338 aa)) are OSBP-related domain (ORD). Residues 64-69 (LTRITL), 126-129 (KPLN), and 157-158 (HH) each bind a 1,2-diacyl-sn-glycero-3-phospho-(1D-myo-inositol 4-phosphate). A 1,2-diacyl-sn-glycero-3-phospho-L-serine contacts are provided by residues 64–69 (LTRITL) and N129. S183 contributes to the a 1,2-diacyl-sn-glycero-3-phospho-L-serine binding site. Positions 351, 355, and 359 each coordinate a 1,2-diacyl-sn-glycero-3-phospho-(1D-myo-inositol 4-phosphate).

It belongs to the OSBP family. Interacts with the AAA ATPase VPS4; regulates OSH6 membrane association. VPS4 is required for membrane dissociation of OSH6.

It is found in the cytoplasm. It localises to the cell membrane. Its subcellular location is the endoplasmic reticulum membrane. The catalysed reaction is a 1,2-diacyl-sn-glycero-3-phospho-L-serine(in) = a 1,2-diacyl-sn-glycero-3-phospho-L-serine(out). In terms of biological role, lipid transport protein (LTP) involved in non-vesicular transfer of lipids between membranes. Functions in phosphoinositide-coupled directional transport of various lipids by carrying the lipid molecule in a hydrophobic pocket and transferring it between membranes through the cytosol. Involved in maintenance of intracellular sterol distribution and homeostasis. Catalyzes the lipid countertransport between the endoplasmic reticulum (ER) and the plasma membrane (PM). Specifically exchanges phosphatidylserine (PS) with phosphatidylinositol 4-phosphate (PI4P), delivering phosphatidylserine to the PM in exchange for PI4P, which is delivered to the ER-localized PI4P phosphatase SAC1 for degradation. Thus, by maintaining a PI4P gradient at the ER/PM interface, SAC1 drives PS transport. Binds phosphatidylserine and PI4P in a mutually exclusive manner. Also binds phosphatidic acid (PA). This chain is Oxysterol-binding protein homolog 6, found in Saccharomyces cerevisiae (strain ATCC 204508 / S288c) (Baker's yeast).